The primary structure comprises 337 residues: Putative 2-aminoethylphosphonate-binding periplasmic protein (337 aa).

The first 21 residues, 1-21, serve as a signal peptide directing secretion; that stretch reads MKLSRLALLSVFALASAPSWA.

It belongs to the bacterial solute-binding protein 1 family.

The protein resides in the periplasm. Probably part of the PhnSTUV complex (TC 3.A.1.11.5) involved in 2-aminoethylphosphonate import. The polypeptide is Putative 2-aminoethylphosphonate-binding periplasmic protein (phnS) (Salmonella typhimurium (strain LT2 / SGSC1412 / ATCC 700720)).